Here is a 199-residue protein sequence, read N- to C-terminus: MDMGNMGMGMGMGMDSGHNHSHMNMGSGHGADSGHACRISMLLNFNTVDACFLSPNWHIRSKGMFAGSIIGIFFLCVLIELIRRLGREFDRWLVKRAGVNSTCGELSSVAEYGKDGAQGGAVVRVAPRFRYVPSWPHQILRGFIYGSQFTAAFFVMLLGMYFNVIVLIFIFLGQTVGYMLFGRDTCGGGFDFGAQGRCC.

The next 2 helical transmembrane spans lie at 62–82 (KGMF…IELI) and 152–172 (AFFV…FIFL).

The protein belongs to the copper transporter (Ctr) (TC 1.A.56) family. SLC31A subfamily.

It localises to the membrane. In terms of biological role, required for high affinity copper (probably reduced Cu I) transport into the cell. Plays a role in fungal pathogenesis during host infection. This chain is Copper transport protein CTR4, found in Cryptococcus neoformans var. grubii serotype A (strain H99 / ATCC 208821 / CBS 10515 / FGSC 9487) (Filobasidiella neoformans var. grubii).